The chain runs to 577 residues: Endopolyphosphatase (577 aa).

Topologically, residues 1 to 2 are cytoplasmic; sequence MR. Residues 3–23 form a helical; Signal-anchor for type II membrane protein membrane-spanning segment; sequence PSVITVAVLFVQSTWASFAFG. Residues 24 to 577 are Vacuolar-facing; that stretch reads NPMSMRNKAH…YIGSISDFED (554 aa). N-linked (GlcNAc...) asparagine glycosylation is found at Asn363, Asn370, Asn375, and Asn399. Residues 430–460 are disordered; sequence SDYEIDKKKKKKKKNNKKKKKNKRKNIKPGP. Residues 437–456 are compositionally biased toward basic residues; sequence KKKKKKKNNKKKKKNKRKNI. N-linked (GlcNAc...) asparagine glycosylation is present at Asn481.

Belongs to the endopolyphosphatase PPN1 family. Requires a divalent metal cation as cofactor. In terms of processing, processing by proteases in the vacuole may be required for activation.

Its subcellular location is the vacuole membrane. The catalysed reaction is [phosphate](n+1) + n H2O = (n+1) phosphate + n H(+). Functionally, catalyzes the hydrolysis of inorganic polyphosphate (polyP) chains of many hundreds of phosphate residues into shorter lengths. This is Endopolyphosphatase (ppn1) from Schizosaccharomyces pombe (strain 972 / ATCC 24843) (Fission yeast).